The chain runs to 71 residues: Phosphatidylinositol N-acetylglucosaminyltransferase subunit Y (71 aa).

Over 1-3 the chain is Cytoplasmic; it reads MFL. The helical transmembrane segment at 4–26 threads the bilayer; it reads SLPMLTVLIPLVSLAGLFYSASV. Over 27–44 the chain is Lumenal; sequence EDDFPQGCTSTTSLCFYS. A helical transmembrane segment spans residues 45–65; sequence LLLPITIPVYVFFHLWTWMGI. Residues 66–71 are Cytoplasmic-facing; sequence KLFRHN.

In terms of assembly, component of the glycosylphosphatidylinositol-N-acetylglucosaminyltransferase (GPI-GnT) complex composed at least by PIGA, PIGC, PIGH, PIGP, PIGQ, PIGY and DPM2. Interacts directly with PIGA; this interaction regulates glycosylphosphatidylinositol-N-acetylglucosaminyltransferase activity. Does not interact with Ras proteins.

The protein localises to the endoplasmic reticulum membrane. It participates in glycolipid biosynthesis; glycosylphosphatidylinositol-anchor biosynthesis. Functionally, part of the glycosylphosphatidylinositol-N-acetylglucosaminyltransferase (GPI-GnT) complex that catalyzes the transfer of N-acetylglucosamine from UDP-N-acetylglucosamine to phosphatidylinositol and participates in the first step of GPI biosynthesis. May act by regulating the catalytic subunit PIGA. This is Phosphatidylinositol N-acetylglucosaminyltransferase subunit Y from Bos taurus (Bovine).